The chain runs to 146 residues: uncharacterized protein (146 aa).

Residues 7 to 146 form the N-acetyltransferase domain; it reads LDINYKTDEL…DGHDVLVWTP (140 aa).

This is an uncharacterized protein from Staphylococcus saprophyticus subsp. saprophyticus (strain ATCC 15305 / DSM 20229 / NCIMB 8711 / NCTC 7292 / S-41).